Consider the following 425-residue polypeptide: UPF0229 protein SG1344 (425 aa).

The disordered stretch occupies residues 49 to 109 (GESVSIPNTD…GQGSVSQDGE (61 aa)). Residues 50–59 (ESVSIPNTDI) show a composition bias toward polar residues. Basic and acidic residues predominate over residues 77 to 90 (PGNDHFVQNDRIER).

The protein belongs to the UPF0229 family.

The chain is UPF0229 protein SG1344 from Sodalis glossinidius (strain morsitans).